A 224-amino-acid chain; its full sequence is Biosynthetic peptidoglycan transglycosylase (224 aa).

Residues valine 9–tryptophan 29 traverse the membrane as a helical segment.

Belongs to the glycosyltransferase 51 family.

The protein resides in the cell inner membrane. The catalysed reaction is [GlcNAc-(1-&gt;4)-Mur2Ac(oyl-L-Ala-gamma-D-Glu-L-Lys-D-Ala-D-Ala)](n)-di-trans,octa-cis-undecaprenyl diphosphate + beta-D-GlcNAc-(1-&gt;4)-Mur2Ac(oyl-L-Ala-gamma-D-Glu-L-Lys-D-Ala-D-Ala)-di-trans,octa-cis-undecaprenyl diphosphate = [GlcNAc-(1-&gt;4)-Mur2Ac(oyl-L-Ala-gamma-D-Glu-L-Lys-D-Ala-D-Ala)](n+1)-di-trans,octa-cis-undecaprenyl diphosphate + di-trans,octa-cis-undecaprenyl diphosphate + H(+). The protein operates within cell wall biogenesis; peptidoglycan biosynthesis. Functionally, peptidoglycan polymerase that catalyzes glycan chain elongation from lipid-linked precursors. The polypeptide is Biosynthetic peptidoglycan transglycosylase (Acinetobacter baylyi (strain ATCC 33305 / BD413 / ADP1)).